The following is a 96-amino-acid chain: Putative membrane protein insertion efficiency factor (96 aa).

Residues 71-84 show a composition bias toward low complexity; it reads THGTAAAPPASAAP. The disordered stretch occupies residues 71 to 96; sequence THGTAAAPPASAAPGRPPVTVRLPRP.

This sequence belongs to the UPF0161 family.

The protein localises to the cell inner membrane. Its function is as follows. Could be involved in insertion of integral membrane proteins into the membrane. The polypeptide is Putative membrane protein insertion efficiency factor (Cupriavidus metallidurans (strain ATCC 43123 / DSM 2839 / NBRC 102507 / CH34) (Ralstonia metallidurans)).